The following is a 533-amino-acid chain: Protein mono-ADP-ribosyltransferase PARP3 (533 aa).

Residues Met-1–Thr-30 form a disordered region. Lys-6 carries the post-translational modification N6-(ADP-ribosyl)lysine. Glu-12 is subject to ADP-ribosyl glutamic acid. The Nuclear localization signal signature appears at Ser-14–Arg-18. ADP-ribosyl glutamic acid occurs at positions 24 and 32. The WGR domain maps to Gly-57–Tyr-147. Asp-138 is modified (ADP-ribosyl aspartic acid). 4 positions are modified to ADP-ribosyl glutamic acid: Glu-160, Glu-230, Glu-309, and Glu-310. One can recognise a PARP alpha-helical domain in the interval Pro-181–Ala-299. A PARP catalytic domain is found at His-313–Leu-533.

Belongs to the ARTD/PARP family. Interacts with PARP1; leading to activate PARP1 in absence of DNA. Interacts with PRKDC. Interacts with XRCC5/Ku80; the interaction is dependent on nucleic acids. Interacts with XRCC6/Ku70; the interaction is dependent on nucleic acids. Interacts with EZH2, HDAC1, HDAC2, SUZ12, YY1, LRIG3 and LIG4. Auto-ADP-ribosylated.

Its subcellular location is the nucleus. It localises to the chromosome. The protein localises to the cytoplasm. The protein resides in the cytoskeleton. It is found in the microtubule organizing center. Its subcellular location is the centrosome. It localises to the centriole. It carries out the reaction L-aspartyl-[protein] + NAD(+) = 4-O-(ADP-D-ribosyl)-L-aspartyl-[protein] + nicotinamide. The catalysed reaction is L-glutamyl-[protein] + NAD(+) = 5-O-(ADP-D-ribosyl)-L-glutamyl-[protein] + nicotinamide. It catalyses the reaction L-lysyl-[protein] + NAD(+) = N(6)-(ADP-D-ribosyl)-L-lysyl-[protein] + nicotinamide + H(+). Functionally, mono-ADP-ribosyltransferase that mediates mono-ADP-ribosylation of target proteins and plays a key role in the response to DNA damage. Mediates mono-ADP-ribosylation of glutamate, aspartate or lysine residues on target proteins. In contrast to PARP1 and PARP2, it is not able to mediate poly-ADP-ribosylation. Involved in DNA repair by mediating mono-ADP-ribosylation of a limited number of acceptor proteins involved in chromatin architecture and in DNA metabolism, such as histone H2B, XRCC5 and XRCC6. ADP-ribosylation follows DNA damage and appears as an obligatory step in a detection/signaling pathway leading to the reparation of DNA strand breaks. Involved in single-strand break repair by catalyzing mono-ADP-ribosylation of histone H2B on 'Glu-2' (H2BE2ADPr) of nucleosomes containing nicked DNA. Cooperates with the XRCC5-XRCC6 (Ku80-Ku70) heterodimer to limit end-resection thereby promoting accurate NHEJ. Suppresses G-quadruplex (G4) structures in response to DNA damage. Associates with a number of DNA repair factors and is involved in the response to exogenous and endogenous DNA strand breaks. Together with APLF, promotes the retention of the LIG4-XRCC4 complex on chromatin and accelerate DNA ligation during non-homologous end-joining (NHEJ). May link the DNA damage surveillance network to the mitotic fidelity checkpoint. Acts as a negative regulator of immunoglobulin class switch recombination, probably by controlling the level of AICDA /AID on the chromatin. In addition to proteins, also able to ADP-ribosylate DNA: mediates DNA mono-ADP-ribosylation of DNA strand break termini via covalent addition of a single ADP-ribose moiety to a 5'- or 3'-terminal phosphate residues in DNA containing multiple strand breaks. The protein is Protein mono-ADP-ribosyltransferase PARP3 of Mus musculus (Mouse).